The sequence spans 269 residues: Diaminopimelate epimerase (269 aa).

Substrate is bound by residues N13, Q46, and N65. C74 functions as the Proton donor in the catalytic mechanism. Substrate-binding positions include 75-76 (GN), N149, N182, and 200-201 (ER). Catalysis depends on C209, which acts as the Proton acceptor. 210-211 (GT) provides a ligand contact to substrate.

This sequence belongs to the diaminopimelate epimerase family. Homodimer.

Its subcellular location is the cytoplasm. It catalyses the reaction (2S,6S)-2,6-diaminopimelate = meso-2,6-diaminopimelate. Its pathway is amino-acid biosynthesis; L-lysine biosynthesis via DAP pathway; DL-2,6-diaminopimelate from LL-2,6-diaminopimelate: step 1/1. Catalyzes the stereoinversion of LL-2,6-diaminopimelate (L,L-DAP) to meso-diaminopimelate (meso-DAP), a precursor of L-lysine and an essential component of the bacterial peptidoglycan. The protein is Diaminopimelate epimerase of Zymomonas mobilis subsp. mobilis (strain ATCC 31821 / ZM4 / CP4).